The chain runs to 94 residues: ESAT-6-like protein EsxI (94 aa).

This sequence belongs to the WXG100 family. ESAT-6 subfamily.

The protein localises to the secreted. This Mycobacterium bovis (strain ATCC BAA-935 / AF2122/97) protein is ESAT-6-like protein EsxI.